The following is a 413-amino-acid chain: Probable Xaa-Pro aminopeptidase UREG_07123 (413 aa).

Mn(2+)-binding residues include Asp-194, Asp-205, Glu-340, and Glu-379.

This sequence belongs to the peptidase M24B family. Requires Mn(2+) as cofactor.

It catalyses the reaction Release of any N-terminal amino acid, including proline, that is linked to proline, even from a dipeptide or tripeptide.. Catalyzes the removal of a penultimate prolyl residue from the N-termini of peptides. This chain is Probable Xaa-Pro aminopeptidase UREG_07123, found in Uncinocarpus reesii (strain UAMH 1704).